Here is a 25-residue protein sequence, read N- to C-terminus: Caerin-2.5 (25 aa).

As to expression, expressed by the skin parotoid and/or rostral glands.

The protein resides in the secreted. Functionally, antibacterial peptide, that adopts an alpha helical conformation which can disrupt bacterial membranes. Each caerin displays a different antimicrobial specificity. The polypeptide is Caerin-2.5 (Ranoidea gilleni (Centralian tree frog)).